We begin with the raw amino-acid sequence, 423 residues long: Voltage-dependent calcium channel gamma-8 subunit (423 aa).

The next 4 helical transmembrane spans lie at 19–39 (VQVL…TIAI), 127–147 (SSIF…CVAA), 157–177 (IILG…IGVI), and 207–227 (FGGL…NIYI). Phosphoserine is present on residues Ser-251 and Ser-254. A disordered region spans residues 271–304 (RRSRSSSRGSSEASPSRDASPGGPGGPGFASTDI). A compositionally biased stretch (low complexity) spans 276 to 287 (SSRGSSEASPSR). A helical transmembrane segment spans residues 318 to 338 (VAAGLASAGGGGSGAGVGAYG). 2 disordered regions span residues 342-363 (GAAG…GFLT) and 378-423 (VTVT…TTPV). Residues 384-399 (PAAPAPAPAPPAPAAP) show a composition bias toward pro residues. Polar residues predominate over residues 410–423 (ASNTNTLNRKTTPV).

The protein belongs to the PMP-22/EMP/MP20 family. CACNG subfamily. As to quaternary structure, interacts with CACNA1C. Identified in a complex with the L-type calcium channel subunits CACNA1C, CACNA2D1 and either CACNB1 or CACNB2. Acts as an auxiliary subunit for AMPA-selective glutamate receptors (AMPARs). Found in a complex with GRIA1, GRIA2, GRIA3, GRIA4, CNIH2, CNIH3, CACNG2, CACNG3, CACNG4, CACNG5 and CACNG7. Interacts with CNIH2. Found in a complex with GRIA1, GRIA2, GRIA3, GRIA4, DLG4 and CNIH2. Post-translationally, palmitoylated. Probably palmitoylated by ZDHHC3 and ZDHHC7.

It is found in the cell membrane. It localises to the postsynaptic density membrane. In terms of biological role, regulates the activity of L-type calcium channels that contain CACNA1C as pore-forming subunit. Regulates the trafficking and gating properties of AMPA-selective glutamate receptors (AMPARs). Promotes their targeting to the cell membrane and synapses and modulates their gating properties by slowing their rates of activation, deactivation and desensitization and by mediating their resensitization. Does not show subunit-specific AMPA receptor regulation and regulates all AMPAR subunits. Thought to stabilize the calcium channel in an inactivated (closed) state. The protein is Voltage-dependent calcium channel gamma-8 subunit of Mus musculus (Mouse).